The chain runs to 156 residues: Putative HTH-type transcriptional regulator YffB (156 aa).

The HTH rrf2-type domain maps to 2-137 (KLSSGWEQSV…SNVSLAQVAD (136 aa)).

This is Putative HTH-type transcriptional regulator YffB (yffB) from Lactococcus lactis subsp. lactis (strain IL1403) (Streptococcus lactis).